The primary structure comprises 295 residues: Microcin B17-processing protein McbB (295 aa).

It is found in the cytoplasm. Functionally, necessary to process the inactive microcin B17 (McbA) precursor into the active peptide. The chain is Microcin B17-processing protein McbB (mcbB) from Escherichia coli.